Consider the following 1087-residue polypeptide: DYRK-family kinase pom1 (1087 aa).

Disordered stretches follow at residues 57–81 (CPNR…NTNI), 120–182 (LLRS…SKSF), 238–308 (MAPK…LSTI), and 336–578 (NHSH…PSLS). A compositionally biased stretch (low complexity) spans 62-81 (SSSSTAADTSPSTNASNTNI). 2 stretches are compositionally biased toward polar residues: residues 132–165 (KNSP…PSSL) and 246–256 (WRHTNFHSTSH). Residues 292-307 (SGSLTKSSSESKNLST) are compositionally biased toward low complexity. Positions 336–361 (NHSHVGSQTKSHSFATPSVFDNNKPV) are enriched in polar residues. Low complexity predominate over residues 362–373 (SSDNHNNTTTSS). The segment covering 397-407 (VDGHRNHEAKH) has biased composition (basic and acidic residues). Low complexity predominate over residues 429 to 442 (RGGFFSRLSFSRSS). Basic residues predominate over residues 478–488 (NGKKTPTRTKS). Ser513 carries the phosphoserine modification. The segment covering 527 to 536 (VSREPEKPEE) has biased composition (basic and acidic residues). The segment covering 555–578 (QQRSVSYTPKRSSDTSESLQPSLS) has biased composition (polar residues). The Protein kinase domain occupies 699 to 995 (YEVVDFLGKG…PQQAAQHDFL (297 aa)). ATP contacts are provided by residues 705–713 (LGKGSFGQV) and Lys728. The active-site Proton acceptor is Asp825. 2 disordered regions span residues 992 to 1011 (HDFL…PARQ) and 1017 to 1056 (PNIE…LVRS). Residues 1045–1055 (EPSNQASNLVR) show a composition bias toward polar residues.

The protein belongs to the protein kinase superfamily. CMGC Ser/Thr protein kinase family. MNB/DYRK subfamily. As to quaternary structure, interacts with rga4. Interacts with tea4; this interaction triggers pom1 plasma membrane association. In terms of processing, autophosphorylates at the cell cortex to lower lipid affinity and promote membrane release. Dephosphorylation by dis2, regulated by tea4, triggers membrane association.

The protein resides in the cell tip. It is found in the cell membrane. The catalysed reaction is L-seryl-[protein] + ATP = O-phospho-L-seryl-[protein] + ADP + H(+). The enzyme catalyses L-threonyl-[protein] + ATP = O-phospho-L-threonyl-[protein] + ADP + H(+). It carries out the reaction L-tyrosyl-[protein] + ATP = O-phospho-L-tyrosyl-[protein] + ADP + H(+). Functionally, polarity factor involved in localization of polarized growth and cytokinesis. Forms an intracellular gradient that serves to measure cell length and control mitotic entry. Controls the timing of mitotic commitment by regulating the inhibitory impact of cdr1/cdr2 on wee1 activity. Directly phosphorylates the tail of cdr2 which inhibits cdr2 activation by ssp1. Cdr2 phosphorylation by pom1 also modulates cdr2 association with membranes and inhibits cdr2 interaction with mid1, reducing its clustering ability, possibly via the down-regulation of cdr2 kinase activity. Acts as a negative regulator of mid1 distribution, excluding mid1 from non-growing ends, which prevents division-septum assembly at the cell ends. The pom1 polar gradient also mediates mitotic entry by regulating cdk1. Plays an essential role in proper localization and phosphorylation of a GAP for cdc42, rga4, which ensures bipolar localization of GTP-bound, active cdc42 involved in F-actin formation. Phosphorylates multiple other substrates that function in polarized cell growth, including tea4, mod5, pal1, the Rho GAP rga7, and the Arf GEF syt22. This is DYRK-family kinase pom1 from Schizosaccharomyces pombe (strain 972 / ATCC 24843) (Fission yeast).